Here is a 324-residue protein sequence, read N- to C-terminus: tRNA U34 carboxymethyltransferase (324 aa).

Residues Lys92, Trp106, Lys111, Gly131, 181 to 182, Met197, Tyr201, and Arg316 each bind carboxy-S-adenosyl-L-methionine; that span reads LE.

It belongs to the class I-like SAM-binding methyltransferase superfamily. CmoB family. Homotetramer.

The catalysed reaction is carboxy-S-adenosyl-L-methionine + 5-hydroxyuridine(34) in tRNA = 5-carboxymethoxyuridine(34) in tRNA + S-adenosyl-L-homocysteine + H(+). In terms of biological role, catalyzes carboxymethyl transfer from carboxy-S-adenosyl-L-methionine (Cx-SAM) to 5-hydroxyuridine (ho5U) to form 5-carboxymethoxyuridine (cmo5U) at position 34 in tRNAs. This chain is tRNA U34 carboxymethyltransferase, found in Syntrophotalea carbinolica (strain DSM 2380 / NBRC 103641 / GraBd1) (Pelobacter carbinolicus).